A 119-amino-acid polypeptide reads, in one-letter code: Large ribosomal subunit protein bL20 (119 aa).

This sequence belongs to the bacterial ribosomal protein bL20 family.

Its function is as follows. Binds directly to 23S ribosomal RNA and is necessary for the in vitro assembly process of the 50S ribosomal subunit. It is not involved in the protein synthesizing functions of that subunit. This is Large ribosomal subunit protein bL20 from Shewanella woodyi (strain ATCC 51908 / MS32).